Here is a 468-residue protein sequence, read N- to C-terminus: UDP-N-acetylmuramate--L-alanine ligase (468 aa).

Residue 114-120 (GTHGKTT) participates in ATP binding.

It belongs to the MurCDEF family.

It is found in the cytoplasm. The catalysed reaction is UDP-N-acetyl-alpha-D-muramate + L-alanine + ATP = UDP-N-acetyl-alpha-D-muramoyl-L-alanine + ADP + phosphate + H(+). Its pathway is cell wall biogenesis; peptidoglycan biosynthesis. In terms of biological role, cell wall formation. This is UDP-N-acetylmuramate--L-alanine ligase from Rhodopseudomonas palustris (strain HaA2).